The primary structure comprises 177 residues: MSDIAKDKAARLLKKRGSIISLGSHDVKPRGSFSKTKDSVSTVSYIDEPGHHDEIQSPAILMENTYQIGPAKRFPVASVNNILKDVLTSYLQEEKYEAELCRQMTKTISEVIKARVKDLMIPRYKIIVLIYIGQLNDQSMRVGSRCIWDPANDTFSSYSFKNSSLFALANVYGVYYE.

This sequence belongs to the dynein light chain Tctex-type family.

The sequence is that of Dynein light chain Tctex-type 5-A (Dynlt5-a) from Xenopus laevis (African clawed frog).